We begin with the raw amino-acid sequence, 565 residues long: Peptide transport periplasmic protein SapA (565 aa).

The signal sequence occupies residues 1 to 23; it reads MLRLNLRFLSFLLCIIQSVELQA.

This sequence belongs to the bacterial solute-binding protein 5 family.

It localises to the periplasm. Functionally, involved in a peptide intake transport system that plays a role in the resistance to antimicrobial peptides. The protein is Peptide transport periplasmic protein SapA (sapA) of Haemophilus influenzae (strain ATCC 51907 / DSM 11121 / KW20 / Rd).